The chain runs to 259 residues: Tumor necrosis factor receptor superfamily member 10C (259 aa).

The signal sequence occupies residues 1–25 (MARIPKTLKFVVVIVAVLLPVLAYS). TNFR-Cys repeat units follow at residues 29–66 (ARQE…TGAC), 69–109 (CTEG…DTVC), and 110–149 (QCKE…DIQC). The span at 30–45 (RQEEVPQQTVAPQQQR) shows a compositional bias: polar residues. The interval 30–56 (RQEEVPQQTVAPQQQRHSFKGEECPAG) is disordered. 7 disulfides stabilise this stretch: Cys-53–Cys-66, Cys-69–Cys-85, Cys-88–Cys-101, Cys-91–Cys-109, Cys-111–Cys-125, Cys-128–Cys-141, and Cys-131–Cys-149. Asn-77 carries N-linked (GlcNAc...) (high mannose) asparagine glycosylation. 2 N-linked (GlcNAc...) (high mannose) asparagine glycosylation sites follow: Asn-140 and Asn-156. The disordered stretch occupies residues 160–224 (ETPAAEETMN…TSPGTPAPAA (65 aa)). TAPE repeat units lie at residues 162–176 (PAAE…GTPA), 177–191 (PAAE…GTPA), 192–206 (PAAE…GTPA), 207–221 (PAAE…GTPA), and 222–236 (PAAE…GTPA). The span at 185–217 (TSPGTPAPAAEETMTTSPGTPAPAAEETMTTSP) shows a compositional bias: low complexity. Residue Ala-236 is the site of GPI-anchor amidated alanine attachment. A propeptide spans 237–259 (SSHYLSCTIVGIIVLIVLLIVFV) (removed in mature form).

Post-translationally, N-glycosylated and O-glycosylated. Higher expression in normal tissues than in tumor cell lines. Highly expressed in peripheral blood lymphocytes, spleen, skeletal muscle, placenta, lung and heart.

It is found in the cell membrane. Its function is as follows. Receptor for the cytotoxic ligand TRAIL. Lacks a cytoplasmic death domain and hence is not capable of inducing apoptosis. May protect cells against TRAIL mediated apoptosis by competing with TRAIL-R1 and R2 for binding to the ligand. This is Tumor necrosis factor receptor superfamily member 10C (TNFRSF10C) from Homo sapiens (Human).